Reading from the N-terminus, the 100-residue chain is Large ribosomal subunit protein bL27 (100 aa).

A propeptide spanning residues 1-13 is cleaved from the precursor; it reads MNKLYWLTDLQLF. Residues 18 to 29 are compositionally biased toward basic and acidic residues; it reads GVDSSKNGRDSN. A disordered region spans residues 18-39; it reads GVDSSKNGRDSNPKYLGAKLGD.

This sequence belongs to the bacterial ribosomal protein bL27 family. The N-terminus is cleaved by ribosomal processing cysteine protease Prp.

The polypeptide is Large ribosomal subunit protein bL27 (Ureaplasma urealyticum serovar 10 (strain ATCC 33699 / Western)).